A 490-amino-acid chain; its full sequence is 5'-3' exonuclease PLD3 (490 aa).

The Cytoplasmic segment spans residues 1-38 (MKPKLMYQELKVPAEEPANELPMNEIEAWKAAEKKARW). The helical; Signal-anchor for type II membrane protein transmembrane segment at 39–59 (VLLVLILAVVGFGALMTQLFL) threads the bilayer. Residues 60 to 490 (WEYGDLHLFG…DSVGNACRLL (431 aa)) are Lumenal-facing. Disulfide bonds link Cys-77-Cys-239 and Cys-81-Cys-237. Asn-97 and Asn-132 each carry an N-linked (GlcNAc...) asparagine glycan. A PLD phosphodiesterase 1 domain is found at 196–223 (THGVLHTKFWVVDQTHFYLGSANMDWRS). Residues His-201, Lys-203, and Asp-208 contribute to the active site. His-201 acts as the Proton donor in catalysis. Residues His-201 and Lys-203 each contribute to the phosphate site. Asn-218 serves as a coordination point for phosphate. N-linked (GlcNAc...) asparagine glycans are attached at residues Asn-236, Asn-284, and Asn-387. The cysteines at positions 366 and 487 are disulfide-linked. Residues 411–437 (YARVNHNKYMVTERATYIGTSNWSGNY) enclose the PLD phosphodiesterase 2 domain. Residue His-416 participates in phosphate binding. His-416 functions as the Nucleophile in the catalytic mechanism. Mg(2+) is bound at residue Phe-438.

The protein belongs to the phospholipase D family. As to quaternary structure, homodimer. Interacts with APP. N-glycosylated. In terms of processing, proteolytically processed to a soluble form that is stable within endosomes and lysosomes. During transport through the secretory pathway becomes proteolysed by cysteine proteases, thereby releasing a stable soluble lysosomal lumenal polypeptide, whereas the transmembrane-bound fragment is rapidly degraded. Its transport route to lysosomes involves ubiquitination and the ESCRT complex. Post-translationally, ubiquitinated. Ubiquitination mediates sorting into lysosomes.

It is found in the endoplasmic reticulum membrane. It localises to the lysosome lumen. The protein resides in the early endosome membrane. Its subcellular location is the late endosome membrane. The protein localises to the golgi apparatus membrane. It is found in the endosome membrane. The catalysed reaction is Exonucleolytic cleavage in the 5'- to 3'-direction to yield nucleoside 3'-phosphates.. The enzyme catalyses a 5'-end 5'-dephospho-ribonucleotidyl-ribonucleotide-RNA + H2O = a ribonucleoside 3'-phosphate + a 5'-end dephospho-ribonucleoside-RNA + H(+). It catalyses the reaction a ribonucleoside 3'-phosphate-2'-3'-cyclophospho-GMP + H2O = a ribonucleoside 3'-phosphate + 2',3'-cyclophospho-GMP + H(+). It carries out the reaction a 5'-end 5'-dephospho-2'-deoxyribonucleotidyl-2'-deoxyribonucleotide in single-stranded DNA + H2O = a 5'-end dephospho-2'-deoxyribonucleoside in single-stranded DNA + a 2'-deoxyribonucleoside 3'-phosphate + H(+). The catalysed reaction is a 5'-end 5'-phospho-2'-deoxyribonucleotide in single-stranded DNA + H2O = a 5'-end 5'-dephospho-2'-deoxyribonucleotide in single-stranded DNA + phosphate. The enzyme catalyses a 3-lyso-sn-glycero-1-phospho-(3'-acyl-1'-sn-glycerol) + a 1-acyl-sn-glycerol = a 3-acyl-sn-glycero-1-phospho-(3'-acyl-1'-sn-glycerol) + glycerol. It catalyses the reaction 3-lyso-sn-glycero-1-phospho-(3'-(9Z-octadecenoyl)-1'-sn-glycerol) + 1-(9Z-octadecenoyl)-sn-glycerol = 3-(9Z-octadecenoyl)-sn-glycero-1-phospho-(3'-(9Z-octadecenoyl)-1'-sn-glycerol) + glycerol. In terms of biological role, 5'-&gt;3' exonuclease that hydrolyzes the phosphodiester bond of single-stranded DNA (ssDNA) and RNA molecules to form nucleoside 3'-monophosphates and 5'-end 5'-hydroxy deoxyribonucleotide/ribonucleotide fragments. Partially redundant with PLD4, can cleave all four nucleotides displaying higher efficiency for ssDNA and RNA fragments initiated with uridine and guanosine residues and lower efficiency for cytidine-initiated substrates. As a result, it does not always degrade polynucleotides to the single nucleotide level, it can stall at specific sites sparing certain fragments from exonucleolytic degradation. Processes self and pathogenic ssDNA and RNA molecules that reach the endolysosomal compartment via phagocytosis or autophagy and may serve as 'danger' signals for recognition by innate immune receptors such as toll-like receptors (TLRs). Degrades mitochondrial CpG-rich ssDNA fragments to prevent TLR9 activation and autoinflammatory response, but it can cleave viral RNA to generate ligands for TLR7 activation and initiate antiviral immune responses. In plasmacytoid dendritic cells, it cooperates with endonuclease RNASET2 to release 2',3'-cyclic guanosine monophosphate (2',3'-cGMP), a potent stimulatory ligand for TLR7. Produces 2',3'-cGMPs and cytidine-rich RNA fragments that occupy TLR7 ligand-binding pockets and trigger a signaling-competent state. Can exert polynucleotide phosphatase activity toward 5'-phosphorylated ssDNA substrates although at a slow rate. Transphosphatidylase that catalyzes the exchange with R to S stereo-inversion of the glycerol moiety between (S,R)-lysophosphatidylglycerol (LPG) and monoacylglycerol (MAG) substrates to yield (S,S)-bis(monoacylglycero)phosphate (BMP). Can synthesize a variety of (S,S)-BMPs representing the main phospholipid constituent of lysosomal intralumenal vesicle (ILV) membranes that bind acid hydrolases for lipid degradation. Regulates the homeostasis and interorganellar communication of the endolysosomal system with an overall impact on cellular removal of dysfunctional organelles via autophagy as well as proper protein and lipid turnover. May play a role in myotube formation in response to ER stress. The sequence is that of 5'-3' exonuclease PLD3 (PLD3) from Macaca fascicularis (Crab-eating macaque).